Consider the following 175-residue polypeptide: Disulfide bond formation protein B 2 (175 aa).

The Cytoplasmic portion of the chain corresponds to 1-9 (MYLARTRFL). Residues 10–26 (FFLASLACASIIGVAFY) traverse the membrane as a helical segment. Residues 27–44 (LQQAVGLDPCTLCMVQRA) lie on the Periplasmic side of the membrane. Cys36 and Cys39 are joined by a disulfide. The chain crosses the membrane as a helical span at residues 45-61 (AFIACGVLALCAACHAP). The Cytoplasmic segment spans residues 62–68 (GPTGTRR). Residues 69 to 85 (YSLGLLLVALAGLAGAG) form a helical membrane-spanning segment. At 86–142 (TQVWLQTASADQLIPFITRLEQILSLLSLDMCIDRLRSDALFCAEITWTLFGISLPE) the chain is on the periplasmic side. A helical transmembrane segment spans residues 143 to 161 (WSLLAFTGLALLPLYPLFS). Over 162 to 175 (ELSHWLATRDRGGY) the chain is Cytoplasmic.

This sequence belongs to the DsbB family.

The protein resides in the cell inner membrane. Functionally, required for disulfide bond formation in some periplasmic proteins. Acts by oxidizing the DsbA protein. The polypeptide is Disulfide bond formation protein B 2 (Pseudomonas syringae pv. syringae (strain B728a)).